A 205-amino-acid polypeptide reads, in one-letter code: Holliday junction branch migration complex subunit RuvA (205 aa).

Residues 1–64 (MIGRLRGVLI…EDAQLLYGFI (64 aa)) form a domain I region. The tract at residues 65-143 (TKKERSLFRL…SLMEASVGSE (79 aa)) is domain II. The segment at 144–156 (REFVLQSNYSPAP) is flexible linker. Positions 157-205 (TVNSAEEDAISALLSLGYKPPQASKAVSAAYKEGMDSETLIKAALKSML) are domain III.

It belongs to the RuvA family. In terms of assembly, homotetramer. Forms an RuvA(8)-RuvB(12)-Holliday junction (HJ) complex. HJ DNA is sandwiched between 2 RuvA tetramers; dsDNA enters through RuvA and exits via RuvB. An RuvB hexamer assembles on each DNA strand where it exits the tetramer. Each RuvB hexamer is contacted by two RuvA subunits (via domain III) on 2 adjacent RuvB subunits; this complex drives branch migration. In the full resolvosome a probable DNA-RuvA(4)-RuvB(12)-RuvC(2) complex forms which resolves the HJ.

It localises to the cytoplasm. Functionally, the RuvA-RuvB-RuvC complex processes Holliday junction (HJ) DNA during genetic recombination and DNA repair, while the RuvA-RuvB complex plays an important role in the rescue of blocked DNA replication forks via replication fork reversal (RFR). RuvA specifically binds to HJ cruciform DNA, conferring on it an open structure. The RuvB hexamer acts as an ATP-dependent pump, pulling dsDNA into and through the RuvAB complex. HJ branch migration allows RuvC to scan DNA until it finds its consensus sequence, where it cleaves and resolves the cruciform DNA. The chain is Holliday junction branch migration complex subunit RuvA from Shewanella sp. (strain MR-4).